Here is a 184-residue protein sequence, read N- to C-terminus: GTP cyclohydrolase 1 (184 aa).

Positions 75, 78, and 146 each coordinate Zn(2+).

The protein belongs to the GTP cyclohydrolase I family. Toroid-shaped homodecamer, composed of two pentamers of five dimers.

The catalysed reaction is GTP + H2O = 7,8-dihydroneopterin 3'-triphosphate + formate + H(+). It participates in cofactor biosynthesis; 7,8-dihydroneopterin triphosphate biosynthesis; 7,8-dihydroneopterin triphosphate from GTP: step 1/1. This Pseudoalteromonas atlantica (strain T6c / ATCC BAA-1087) protein is GTP cyclohydrolase 1.